The sequence spans 406 residues: 2,3-bisphosphoglycerate-independent phosphoglycerate mutase (406 aa).

Belongs to the BPG-independent phosphoglycerate mutase family. A-PGAM subfamily.

The enzyme catalyses (2R)-2-phosphoglycerate = (2R)-3-phosphoglycerate. It functions in the pathway carbohydrate degradation; glycolysis; pyruvate from D-glyceraldehyde 3-phosphate: step 3/5. Its function is as follows. Catalyzes the interconversion of 2-phosphoglycerate and 3-phosphoglycerate. The chain is 2,3-bisphosphoglycerate-independent phosphoglycerate mutase from Methanococcus maripaludis (strain DSM 14266 / JCM 13030 / NBRC 101832 / S2 / LL).